A 370-amino-acid chain; its full sequence is MNERTSDAFDALLVLSFGGPEGHEEVRPFLENVTHGRGIPPERLDEVAVHYHHFGGISPINALNREIIANVEKELASRDHKLPVYFGNRNWKPFDNEAAEQMADDGVKNALVLATSAWGGYSGCRQYQEDIQGMIKHLESQGQSITFTKLRQFYDHPRFVSTMAQLVQDSYAKLPDELRDEARLVFTAHSIPLTADNAAGTPEDGSLYSTQVKEASALIAEAVGVSDFDVVWQSRSGSPHTPWLEPDIVDHAVELNEKGQKALVVCPVGFISDHMEVIWDLDSELMEEAEKRNMVVERVATVGPTDEFAALVVDLIEEAELKRVIERLGKLPARGSSVNGAPCGDGCCGTAKHKTARVNPNARSAAPAAN.

2 residues coordinate Fe-coproporphyrin III: Ser58 and Tyr127. Fe(2+)-binding residues include His189 and Glu276.

The protein belongs to the ferrochelatase family.

The protein resides in the cytoplasm. It catalyses the reaction Fe-coproporphyrin III + 2 H(+) = coproporphyrin III + Fe(2+). It functions in the pathway porphyrin-containing compound metabolism; protoheme biosynthesis. In terms of biological role, involved in coproporphyrin-dependent heme b biosynthesis. Catalyzes the insertion of ferrous iron into coproporphyrin III to form Fe-coproporphyrin III. This is Coproporphyrin III ferrochelatase from Corynebacterium glutamicum (strain ATCC 13032 / DSM 20300 / JCM 1318 / BCRC 11384 / CCUG 27702 / LMG 3730 / NBRC 12168 / NCIMB 10025 / NRRL B-2784 / 534).